The primary structure comprises 421 residues: Trimethyllysine dioxygenase, mitochondrial (421 aa).

The transit peptide at 1 to 15 directs the protein to the mitochondrion; sequence MWYHRLSHLHSRLQD. An N6-acetyllysine mark is found at K179 and K236. Fe cation is bound by residues H242, D244, and H389.

This sequence belongs to the gamma-BBH/TMLD family. In terms of assembly, homodimer. Fe(2+) is required as a cofactor. The cofactor is L-ascorbate. In terms of tissue distribution, all isoforms, but isoform 8, are widely expressed in adult and fetal tissues. Isoform 8 is restricted to heart and skeletal muscle.

The protein resides in the mitochondrion matrix. It carries out the reaction N(6),N(6),N(6)-trimethyl-L-lysine + 2-oxoglutarate + O2 = (3S)-3-hydroxy-N(6),N(6),N(6)-trimethyl-L-lysine + succinate + CO2. The protein operates within amine and polyamine biosynthesis; carnitine biosynthesis. Its function is as follows. Converts trimethyllysine (TML) into hydroxytrimethyllysine (HTML). The protein is Trimethyllysine dioxygenase, mitochondrial (TMLHE) of Homo sapiens (Human).